Consider the following 505-residue polypeptide: Lysine--tRNA ligase (505 aa).

2 residues coordinate Mg(2+): E415 and E422.

It belongs to the class-II aminoacyl-tRNA synthetase family. Homodimer. Requires Mg(2+) as cofactor.

The protein resides in the cytoplasm. The catalysed reaction is tRNA(Lys) + L-lysine + ATP = L-lysyl-tRNA(Lys) + AMP + diphosphate. This Salmonella typhi protein is Lysine--tRNA ligase.